The primary structure comprises 796 residues: Vacuolar protein sorting-associated protein 35 (796 aa).

A Phosphoserine modification is found at serine 7. Interaction with SNX3 stretches follow at residues valine 25 to lysine 44 and aspartate 205 to glutamate 215. Positions cysteine 438–leucine 796 are interaction with SLC11A2. Residues serine 500–glycine 693 form an interaction with IGF2R cytoplasmic domain region. Serine 783 carries the phosphoserine modification. The residue at position 791 (tyrosine 791) is a Phosphotyrosine.

Belongs to the VPS35 family. Component of the heterotrimeric retromer cargo-selective complex (CSC), also decribed as vacuolar protein sorting subcomplex (VPS), formed by VPS26 (VPS26A or VPS26B), VPS29 and VPS35. The CSC has a highly elongated structure with VPS26 and VPS29 binding independently at opposite distal ends of VPS35 as central platform. The CSC is believed to associate with variable sorting nexins to form functionally distinct retromer complex variants. The originally described retromer complex (also called SNX-BAR retromer) is a pentamer containing the CSC and a heterodimeric membrane-deforming subcomplex formed between SNX1 or SNX2 and SNX5 or SNX6 (also called SNX-BAR subcomplex); the respective CSC and SNX-BAR subcomplexes associate with low affinity. The CSC associates with SNX3 to form a SNX3-retromer complex. The CSC associates with SNX27, the WASH complex and the SNX-BAR subcomplex to form the SNX27-retromer complex. Interacts with VPS26A, VPS26B, VPS29, SNX1, SNX2, IGF2R, SNX3, GOLPH3, LRRK2, SLC11A2, WASHC2A, WASHC2C, FKBP15, WASHC1, RAB7A, SNX27, WASHC5, EHD1. Interacts with MAGEL2; leading to recruitment of the TRIM27:MAGEL2 E3 ubiquitin ligase complex retromer-containing endosomes. Interacts with SORCS2. In terms of assembly, (Microbial infection) Interacts with human papillomavirus 16 minor capsid protein L2 (via C-terminus); this interaction mediates the transport of the capsid from the early endosome to the Golgi apparatus. Ubiquitous. Highly expressed in heart, brain, placenta, skeletal muscle, spleen, thymus, testis, ovary, small intestine, kidney and colon.

The protein localises to the cytoplasm. It localises to the membrane. Its subcellular location is the endosome. The protein resides in the early endosome. It is found in the late endosome. In terms of biological role, acts as a component of the retromer cargo-selective complex (CSC). The CSC is believed to be the core functional component of retromer or respective retromer complex variants acting to prevent missorting of selected transmembrane cargo proteins into the lysosomal degradation pathway. The recruitment of the CSC to the endosomal membrane involves RAB7A and SNX3. The CSC seems to associate with the cytoplasmic domain of cargo proteins predominantly via VPS35; however, these interactions seem to be of low affinity and retromer SNX proteins may also contribute to cargo selectivity thus questioning the classical function of the CSC. The SNX-BAR retromer mediates retrograde transport of cargo proteins from endosomes to the trans-Golgi network (TGN) and is involved in endosome-to-plasma membrane transport for cargo protein recycling. The SNX3-retromer mediates the retrograde endosome-to-TGN transport of WLS distinct from the SNX-BAR retromer pathway. The SNX27-retromer is believed to be involved in endosome-to-plasma membrane trafficking and recycling of a broad spectrum of cargo proteins. The CSC seems to act as recruitment hub for other proteins, such as the WASH complex and TBC1D5. Required for retrograde transport of lysosomal enzyme receptor IGF2R and SLC11A2. Required to regulate transcytosis of the polymeric immunoglobulin receptor (pIgR-pIgA). Required for endosomal localization of WASHC2C. Mediates the association of the CSC with the WASH complex via WASHC2. Required for the endosomal localization of TBC1D5. (Microbial infection) The heterotrimeric retromer cargo-selective complex (CSC) mediates the exit of human papillomavirus from the early endosome and the delivery to the Golgi apparatus. This chain is Vacuolar protein sorting-associated protein 35, found in Homo sapiens (Human).